The following is a 102-amino-acid chain: NADH-quinone oxidoreductase subunit K (102 aa).

The next 3 membrane-spanning stretches (helical) occupy residues 6–26, 30–50, and 63–83; these read LIGM…GVLA, ILFQ…AFVA, and MLIL…ALLL.

Belongs to the complex I subunit 4L family. NDH-1 is composed of 14 different subunits. Subunits NuoA, H, J, K, L, M, N constitute the membrane sector of the complex.

The protein localises to the cell inner membrane. The catalysed reaction is a quinone + NADH + 5 H(+)(in) = a quinol + NAD(+) + 4 H(+)(out). Its function is as follows. NDH-1 shuttles electrons from NADH, via FMN and iron-sulfur (Fe-S) centers, to quinones in the respiratory chain. The immediate electron acceptor for the enzyme in this species is believed to be ubiquinone. Couples the redox reaction to proton translocation (for every two electrons transferred, four hydrogen ions are translocated across the cytoplasmic membrane), and thus conserves the redox energy in a proton gradient. The chain is NADH-quinone oxidoreductase subunit K from Rhodopseudomonas palustris (strain HaA2).